The chain runs to 118 residues: RxLR effector protein PITG_19617 (118 aa).

The N-terminal stretch at Met-1 to Ala-21 is a signal peptide. A RxLR-dEER motif is present at residues Arg-50–Glu-64.

The protein belongs to the RxLR effector family.

It localises to the secreted. The protein resides in the host nucleus. Its subcellular location is the host cytoplasm. Effector that enhances P.infestans colonization of Nicotiana benthamiana leaves. The chain is RxLR effector protein PITG_19617 from Phytophthora infestans (strain T30-4) (Potato late blight agent).